Reading from the N-terminus, the 430-residue chain is Tol-Pal system protein TolB (430 aa).

Positions 1 to 21 are cleaved as a signal peptide; that stretch reads MKQALRVAFGFLILWASVLHA.

This sequence belongs to the TolB family. In terms of assembly, the Tol-Pal system is composed of five core proteins: the inner membrane proteins TolA, TolQ and TolR, the periplasmic protein TolB and the outer membrane protein Pal. They form a network linking the inner and outer membranes and the peptidoglycan layer.

The protein resides in the periplasm. Functionally, part of the Tol-Pal system, which plays a role in outer membrane invagination during cell division and is important for maintaining outer membrane integrity. TolB occupies a key intermediary position in the Tol-Pal system because it communicates directly with both membrane-embedded components, Pal in the outer membrane and TolA in the inner membrane. This is Tol-Pal system protein TolB from Shigella boydii serotype 18 (strain CDC 3083-94 / BS512).